The sequence spans 461 residues: MATATTQRPLKGPAKRMSTWTMTREAITIGFDAGDGFLGRLRGSDITRFRCAGRRFVSISHPDYVDHVLHEARLKYVKSDEYGPIRATAGLNLLTDEGDSWARHRGALNSTFARRHLRGLVGLMIDPIADVTAARVPGAQFDMHQSMVETTLRVVANALFSQDFGPLVQSMHDLATRGLRRAEKLERLGLWGLMPRTVYDTLIWCIYSGVHLPPPLREMQEITLTLDRAINSVIDRRLAEPTNSADLLNVLLSADGGIWPRQRVRDEALTFMLAGHETTANAMSWFWYLMALNPQARDHMLTELDDVLGMRRPTADDLGKLAWTTACLQESQRYFSSVWIIAREAVDDDIIDGHRIRRGTTVVIPIHHIHHDPRWWPDPDRFDPGRFLRCPTDRPRCAYLPFGGGRRICIGQSFALMEMVLMAAIMSQHFTFDLAPGYHVELEATLTLRPKHGVHVIGRRR.

Cys-409 is a heme binding site.

Belongs to the cytochrome P450 family. Heme serves as cofactor.

This is Putative cytochrome P450 132 (cyp132) from Mycobacterium tuberculosis (strain ATCC 25618 / H37Rv).